The primary structure comprises 188 residues: UPF0301 protein MCA2336 2 (188 aa).

The protein belongs to the UPF0301 (AlgH) family.

In Methylococcus capsulatus (strain ATCC 33009 / NCIMB 11132 / Bath), this protein is UPF0301 protein MCA2336 2.